The primary structure comprises 1285 residues: Tat-binding homolog 7 (1285 aa).

Disordered stretches follow at residues 1–95 (MARS…LTYR), 121–173 (MSDD…RTRR), 224–243 (GREE…EKEQ), and 258–359 (QEDE…ERGR). 2 stretches are compositionally biased toward acidic residues: residues 226-237 (EEEEEGDEEEAE) and 258-270 (QEDE…ESSE). Basic residues predominate over residues 311-325 (NRHHRNRNTSNRRRR). An ATP-binding site is contributed by 446–453 (GPPGTGKT). The Bromo domain maps to 928–1032 (ALQRQMRMFF…NTFRDAIDDM (105 aa)). The disordered stretch occupies residues 1100 to 1196 (EKLKEKLGIS…PTIQSSSSQE (97 aa)). Positions 1136 to 1149 (KLNKKKKDQKRNKK) are enriched in basic residues. Acidic residues predominate over residues 1155–1175 (PDGDDTEETEEAVAENNVDAD).

This sequence belongs to the AAA ATPase family.

Its function is as follows. Thought to form a complex that enhances transcription from repetitive DNA sequences by modulating chromatin structure. The protein is Tat-binding homolog 7 of Caenorhabditis briggsae.